Here is a 205-residue protein sequence, read N- to C-terminus: Small ribosomal subunit protein uS4 (205 aa).

The segment at 18–46 is disordered; that stretch reads NIWGRSKSPVNRREYGPGQHGQRRKGKLS. Residues 94–157 form the S4 RNA-binding domain; sequence RRLDAVVYRA…RQMTLVLEAQ (64 aa).

The protein belongs to the universal ribosomal protein uS4 family. In terms of assembly, part of the 30S ribosomal subunit. Contacts protein S5. The interaction surface between S4 and S5 is involved in control of translational fidelity.

In terms of biological role, one of the primary rRNA binding proteins, it binds directly to 16S rRNA where it nucleates assembly of the body of the 30S subunit. Functionally, with S5 and S12 plays an important role in translational accuracy. The sequence is that of Small ribosomal subunit protein uS4 from Xanthobacter autotrophicus (strain ATCC BAA-1158 / Py2).